The sequence spans 220 residues: Large ribosomal subunit protein uL3 (220 aa).

The segment at 61–81 (KGSKSNKYANKPAEGHAKKAD) is disordered.

This sequence belongs to the universal ribosomal protein uL3 family. Part of the 50S ribosomal subunit. Forms a cluster with proteins L14 and L19.

One of the primary rRNA binding proteins, it binds directly near the 3'-end of the 23S rRNA, where it nucleates assembly of the 50S subunit. The polypeptide is Large ribosomal subunit protein uL3 (Staphylococcus epidermidis (strain ATCC 12228 / FDA PCI 1200)).